Reading from the N-terminus, the 550-residue chain is Transcription factor 7-like 1-D (550 aa).

The interaction with CTNNB1-A stretch occupies residues 1-61; the sequence is MPQLNSGXGD…SENHSSDSDS (61 aa). Disordered regions lie at residues 1-77, 182-212, 390-473, and 488-514; these read MPQL…EKPR, GTPP…PYYP, WSAR…SLTT, and ASKS…SRPI. Composition is skewed to basic and acidic residues over residues 17-32 and 52-77; these read ELIR…EKSP and SENH…EKPR. Residues 109–311 are interaction with AES and TLE4-A; the sequence is LGGITCPMVP…SPNLSMKSNV (203 aa). The HMG box DNA-binding region spans 323–391; sequence IKKPLNAFML…LHSQLYPSWS (69 aa). The segment covering 406–415 has biased composition (basic and acidic residues); sequence KQSPEMENYT. The tract at residues 407 to 550 is interaction with CTBP-B; it reads QSPEMENYTK…PLPLVARSSD (144 aa). Positions 444–455 are enriched in low complexity; sequence SPATPSAALASP.

It belongs to the TCF/LEF family. As to quaternary structure, interacts with csnk1e, ctnnb1-A, ctbp-B, dact1-A and gsk3b. May interact with ase and tle4-A. In terms of processing, phosphorylated. Phosphorylation by csnk1e promotes binding to ctnnb1-A while phosphorylation by gsk3b may reverse this effect.

The protein resides in the nucleus. Its function is as follows. Participates in the Wnt signaling pathway. Binds to DNA and acts as a repressor in the absence of ctnnb1-A and possibly ctnnb1-B, and as an activator in the presence of these proteins. Required early in development for the establishment of the dorsal body axis in response to maternal Wnt signaling. The protein is Transcription factor 7-like 1-D (tcf7l1-d) of Xenopus laevis (African clawed frog).